The sequence spans 424 residues: Dihydroorotase (424 aa).

Residues His61 and His63 each contribute to the Zn(2+) site. Substrate-binding positions include His63–Arg65 and Asn95. The Zn(2+) site is built by Asp153, His180, and His233. Asn279 contributes to the substrate binding site. Asp306 provides a ligand contact to Zn(2+). Asp306 is an active-site residue. His310 is a substrate binding site.

Belongs to the metallo-dependent hydrolases superfamily. DHOase family. Class I DHOase subfamily. It depends on Zn(2+) as a cofactor.

The catalysed reaction is (S)-dihydroorotate + H2O = N-carbamoyl-L-aspartate + H(+). It functions in the pathway pyrimidine metabolism; UMP biosynthesis via de novo pathway; (S)-dihydroorotate from bicarbonate: step 3/3. Catalyzes the reversible cyclization of carbamoyl aspartate to dihydroorotate. In Pelobacter propionicus (strain DSM 2379 / NBRC 103807 / OttBd1), this protein is Dihydroorotase.